The chain runs to 472 residues: 3-isopropylmalate dehydratase large subunit (472 aa).

Residues Cys347, Cys407, and Cys410 each coordinate [4Fe-4S] cluster.

The protein belongs to the aconitase/IPM isomerase family. LeuC type 1 subfamily. Heterodimer of LeuC and LeuD. [4Fe-4S] cluster is required as a cofactor.

It carries out the reaction (2R,3S)-3-isopropylmalate = (2S)-2-isopropylmalate. It functions in the pathway amino-acid biosynthesis; L-leucine biosynthesis; L-leucine from 3-methyl-2-oxobutanoate: step 2/4. In terms of biological role, catalyzes the isomerization between 2-isopropylmalate and 3-isopropylmalate, via the formation of 2-isopropylmaleate. This Bacillus velezensis (strain DSM 23117 / BGSC 10A6 / LMG 26770 / FZB42) (Bacillus amyloliquefaciens subsp. plantarum) protein is 3-isopropylmalate dehydratase large subunit.